The primary structure comprises 574 residues: Frizzled-7 (574 aa).

The first 32 residues, 1–32 (MRDPGAAAPLSSLGLCALVLALLGALSAGAGA), serve as a signal peptide directing secretion. The Extracellular portion of the chain corresponds to 33–256 (QPYHGEKGIS…EEERRFARLW (224 aa)). Positions 44–163 (PDHGFCQPIS…HGAGEICVGQ (120 aa)) constitute an FZ domain. Disulfide bonds link Cys49–Cys110, Cys57–Cys103, Cys94–Cys131, Cys120–Cys160, and Cys124–Cys148. A glycan (N-linked (GlcNAc...) asparagine) is linked at Asn63. Asn164 carries an N-linked (GlcNAc...) asparagine glycan. Residues 257–277 (VGVWSVLCCASTLFTVLTYLV) form a helical membrane-spanning segment. Topologically, residues 278–288 (DMRRFSYPERP) are cytoplasmic. Residues 289–309 (IIFLSGCYFMVAVAHVAGFLL) traverse the membrane as a helical segment. At 310–336 (EDRAVCVERFSDDGYRTVAQGTKKEGC) the chain is on the extracellular side. The chain crosses the membrane as a helical span at residues 337–357 (TILFMVLYFFGMASSIWWVIL). Topologically, residues 358–379 (SLTWFLAAGMKWGHEAIEANSQ) are cytoplasmic. Residues 380-400 (YFHLAAWAVPAVKTITILAMG) form a helical membrane-spanning segment. Topologically, residues 401 to 423 (QVDGDLLSGVCYVGLSSVDALRG) are extracellular. A helical membrane pass occupies residues 424 to 444 (FVLAPLFVYLFIGTSFLLAGF). The Cytoplasmic segment spans residues 445–470 (VSLFRIRTIMKHDGTKTEKLEKLMVR). Residues 471 to 491 (IGVFSVLYTVPATIVLACYFY) traverse the membrane as a helical segment. The Extracellular portion of the chain corresponds to 492-528 (EQAFREHWERTWLLQTCKSYAVPCPPGHFPPMSPDFT). The helical transmembrane segment at 529–549 (VFMIKYLMTMIVGITTGFWIW) threads the bilayer. Residues 550–574 (SGKTLQSWRRFYHRLSHSSKGETAV) are Cytoplasmic-facing. The Lys-Thr-X-X-X-Trp motif, mediates interaction with the PDZ domain of Dvl family members motif lies at 552–557 (KTLQSW). Residues 572–574 (TAV) carry the PDZ-binding motif.

This sequence belongs to the G-protein coupled receptor Fz/Smo family. Interacts with MAGI3. Interacts with DVL1. Interacts with CCDC88C/DAPLE; the interaction displaces DVL1 from FZD7, leading to inhibition of canonical Wnt signaling and triggering of non-canonical Wnt responses. Interacts with MYOC. Binds to SDCBP; this interaction is increased by inositol trisphosphate (IP3). Interacts with glypican GPC3. In terms of assembly, (Microbial infection) Interacts with C.difficile toxin TcdB; frizzled receptors constitute the major host receptors for TcdB in the colonic epithelium. In terms of processing, ubiquitinated by ZNRF3, leading to its degradation by the proteasome. In terms of tissue distribution, high expression in adult skeletal muscle and fetal kidney, followed by fetal lung, adult heart, brain, and placenta. Specifically expressed in squamous cell esophageal carcinomas.

The protein localises to the cell membrane. The protein resides in the endosome membrane. Its function is as follows. Receptor for Wnt proteins. Most frizzled receptors are coupled to the beta-catenin canonical signaling pathway, which leads to the activation of disheveled proteins, inhibition of GSK-3 kinase, nuclear accumulation of beta-catenin and activation of Wnt target genes. A second signaling pathway involving PKC and calcium fluxes has been seen for some family members, but it is not yet clear if it represents a distinct pathway or if it can be integrated in the canonical pathway, as PKC seems to be required for Wnt-mediated inactivation of GSK-3 kinase. Both pathways seem to involve interactions with G-proteins. Activation by WNT8 induces expression of beta-catenin target genes. Following ligand activation, binds to CCDC88C/DAPLE which displaces DVL1 from FZD7 and leads to inhibition of canonical Wnt signaling, activation of G-proteins by CCDC88C and triggering of non-canonical Wnt responses. May be involved in transduction and intercellular transmission of polarity information during tissue morphogenesis and/or in differentiated tissues. (Microbial infection) Acts as a receptor for C.difficile toxin TcdB in the colonic epithelium. In Homo sapiens (Human), this protein is Frizzled-7 (FZD7).